A 267-amino-acid chain; its full sequence is Putative transcription factor Ovo-like 1 (267 aa).

4 consecutive C2H2-type zinc fingers follow at residues Phe-118 to His-140, His-146 to His-168, Tyr-174 to His-197, and Tyr-213 to His-236.

In terms of tissue distribution, expressed in skin, testis, kidney and weakly in lung. Not detected in heart, brain, spleen, liver and skeletal muscle.

The protein resides in the nucleus. Its function is as follows. Putative transcription factor. Involved in hair formation and spermatogenesis. May function in the differentiation and/or maintenance of the urogenital system. In Mus musculus (Mouse), this protein is Putative transcription factor Ovo-like 1 (Ovol1).